Consider the following 363-residue polypeptide: NADH-quinone oxidoreductase subunit H (363 aa).

Transmembrane regions (helical) follow at residues 62 to 82 (GPMY…KLLF), 94 to 114 (AIFV…WAVV), 127 to 147 (VGLL…ILAG), 166 to 186 (VVSY…AAGS), 202 to 222 (FFDW…VSGV), 239 to 257 (IVAG…LFFL), 264 to 286 (ILVS…QGWV), 293 to 313 (LIDW…LFFA), and 339 to 359 (FIPL…SGVI).

It belongs to the complex I subunit 1 family. NDH-1 is composed of 14 different subunits. Subunits NuoA, H, J, K, L, M, N constitute the membrane sector of the complex.

The protein resides in the cell inner membrane. The catalysed reaction is a quinone + NADH + 5 H(+)(in) = a quinol + NAD(+) + 4 H(+)(out). Functionally, NDH-1 shuttles electrons from NADH, via FMN and iron-sulfur (Fe-S) centers, to quinones in the respiratory chain. The immediate electron acceptor for the enzyme in this species is believed to be ubiquinone. Couples the redox reaction to proton translocation (for every two electrons transferred, four hydrogen ions are translocated across the cytoplasmic membrane), and thus conserves the redox energy in a proton gradient. This subunit may bind ubiquinone. This is NADH-quinone oxidoreductase subunit H from Xylella fastidiosa (strain 9a5c).